Consider the following 688-residue polypeptide: Glycine--tRNA ligase beta subunit (688 aa).

This sequence belongs to the class-II aminoacyl-tRNA synthetase family. In terms of assembly, tetramer of two alpha and two beta subunits.

It is found in the cytoplasm. It carries out the reaction tRNA(Gly) + glycine + ATP = glycyl-tRNA(Gly) + AMP + diphosphate. The polypeptide is Glycine--tRNA ligase beta subunit (Shewanella oneidensis (strain ATCC 700550 / JCM 31522 / CIP 106686 / LMG 19005 / NCIMB 14063 / MR-1)).